We begin with the raw amino-acid sequence, 599 residues long: UvrABC system protein C (599 aa).

The region spanning 15–93 (EKPGCYQYFD…IKEYQPRYNV (79 aa)) is the GIY-YIG domain. Residues 207 to 242 (HRLVRMYRDRMQVYSEGLRFEEAQICKERIELLERY) enclose the UVR domain.

The protein belongs to the UvrC family. In terms of assembly, interacts with UvrB in an incision complex.

It localises to the cytoplasm. The UvrABC repair system catalyzes the recognition and processing of DNA lesions. UvrC both incises the 5' and 3' sides of the lesion. The N-terminal half is responsible for the 3' incision and the C-terminal half is responsible for the 5' incision. This Porphyromonas gingivalis (strain ATCC BAA-308 / W83) protein is UvrABC system protein C.